The following is a 359-amino-acid chain: Peptide methionine sulfoxide reductase MsrA/MsrB (359 aa).

A peptide methionine sulfoxide reductase A region spans residues 36–189; that stretch reads RVIYLAGGCF…PGGYCHIDLK (154 aa). The active site involves Cys-44. A MsrB domain is found at 206-329; it reads DEVLKKKLTK…NSAALRFIPL (124 aa). The active-site Nucleophile is Cys-318.

The protein in the N-terminal section; belongs to the MsrA Met sulfoxide reductase family. In the C-terminal section; belongs to the MsrB Met sulfoxide reductase family.

The enzyme catalyses L-methionyl-[protein] + [thioredoxin]-disulfide + H2O = L-methionyl-(S)-S-oxide-[protein] + [thioredoxin]-dithiol. It catalyses the reaction [thioredoxin]-disulfide + L-methionine + H2O = L-methionine (S)-S-oxide + [thioredoxin]-dithiol. It carries out the reaction L-methionyl-[protein] + [thioredoxin]-disulfide + H2O = L-methionyl-(R)-S-oxide-[protein] + [thioredoxin]-dithiol. Its function is as follows. Has an important function as a repair enzyme for proteins that have been inactivated by oxidation. Catalyzes the reversible oxidation-reduction of methionine sulfoxide in proteins to methionine. In Helicobacter pylori (strain J99 / ATCC 700824) (Campylobacter pylori J99), this protein is Peptide methionine sulfoxide reductase MsrA/MsrB (msrAB).